Here is a 974-residue protein sequence, read N- to C-terminus: Ovochymase-2 (974 aa).

A signal peptide spans methionine 1–glycine 21. Residues valine 22–arginine 49 constitute a propeptide, activation peptide. Asparagine 39 is a glycosylation site (N-linked (GlcNAc...) asparagine). In terms of domain architecture, Peptidase S1 1 spans isoleucine 50 to asparagine 299. Cysteines 75 and 91 form a disulfide. The active-site Charge relay system is histidine 90. 2 residues coordinate Ca(2+): valine 112 and glutamate 117. The Charge relay system role is filled by aspartate 140. Disulfide bonds link cysteine 174–cysteine 244, cysteine 205–cysteine 223, cysteine 234–cysteine 263, cysteine 312–cysteine 342, cysteine 369–cysteine 388, cysteine 435–cysteine 462, cysteine 489–cysteine 510, cysteine 615–cysteine 631, cysteine 713–cysteine 776, cysteine 741–cysteine 754, and cysteine 766–cysteine 795. The Charge relay system role is filled by serine 238. 2 consecutive CUB domains span residues cysteine 312–valine 425 and cysteine 435–valine 547. A Peptidase S1 2 domain is found at leucine 590–leucine 819. Residues leucine 590–asparagine 974 constitute a propeptide, activation peptide. N-linked (GlcNAc...) asparagine glycosylation occurs at asparagine 763. Positions glutamate 830–glutamine 858 are disordered. The N-linked (GlcNAc...) asparagine glycan is linked to asparagine 926.

The protein belongs to the peptidase S1 family. The catalytically inactive 107 kDa form is processed both N- and C-terminally to give rise to the 66 kDa catalytically active form and inactive forms of 82 kDa and 59 kDa. Expressed specifically in the cells lining the bottom of epithelial folds in the oviductal pars recta.

It is found in the secreted. It carries out the reaction Preferential cleavage at 371-Gly-Ser-Arg-|-Trp-374 of glycoprotein gp43 in Xenopus laevis coelemic egg envelope to yield gp41.. In terms of biological role, mediates gamete interaction by affecting the vitelline coat. This Bufo japonicus (Japanese common toad) protein is Ovochymase-2 (OVCH2).